The chain runs to 326 residues: Lipopolysaccharide heptosyltransferase 1 (326 aa).

ADP-binding residues include T187, T188, K192, E222, and M242. ADP-L-glycero-beta-D-manno-heptose contacts are provided by T187, T188, K192, E222, M242, D261, T262, G263, and H266. The ADP site is built by T262 and G263.

This sequence belongs to the glycosyltransferase 9 family. In terms of assembly, monomer.

It is found in the cell inner membrane. It carries out the reaction an alpha-Kdo-(2-&gt;4)-alpha-Kdo-(2-&gt;6)-lipid A + ADP-L-glycero-beta-D-manno-heptose = an L-alpha-D-Hep-(1-&gt;5)-[alpha-Kdo-(2-&gt;4)]-alpha-Kdo-(2-&gt;6)-lipid A + ADP + H(+). The catalysed reaction is alpha-Kdo-(2-&gt;4)-alpha-Kdo-(2-&gt;6)-lipid A (E. coli) + ADP-L-glycero-beta-D-manno-heptose = L-alpha-D-Hep-(1-&gt;5)-[alpha-Kdo-(2-&gt;4)]-alpha-Kdo-(2-&gt;6)-lipid A (E. coli) + ADP + H(+). It participates in bacterial outer membrane biogenesis; LPS core biosynthesis. Inhibited by ADP-L-glycero-beta-D-gluco-2-deoxy-2-fluoro-heptose (ADP-2F-heptose), a non-cleavable analog of the substrate ADP-L-glycero-beta-D-manno-heptose. Glycosyltransferase involved in the biosynthesis of the core oligosaccharide region of lipopolysaccharide (LPS). Catalyzes the addition of the first heptose unit to one 3-deoxy-D-manno-octulosonic acid (Kdo) residue of the Kdo2-lipid A module. The sequence is that of Lipopolysaccharide heptosyltransferase 1 from Escherichia coli O18:K1:H7 (strain RS218 / NMEC).